Reading from the N-terminus, the 152-residue chain is Transcriptional regulator MraZ (152 aa).

SpoVT-AbrB domains lie at 5–52 and 81–124; these read ASAI…PLHE and AQDC…EESA.

Belongs to the MraZ family. In terms of assembly, forms oligomers.

The protein resides in the cytoplasm. It is found in the nucleoid. This is Transcriptional regulator MraZ from Shewanella frigidimarina (strain NCIMB 400).